The chain runs to 67 residues: MTLTGKVKWFNSEKGFGFIEVEGGNDVFVHFSAITGDGFKSLDEGQEVSFEVEDGNRGPQAKNVVKL.

A CSD domain is found at 5–64 (GKVKWFNSEKGFGFIEVEGGNDVFVHFSAITGDGFKSLDEGQEVSFEVEDGNRGPQAKNV).

In terms of assembly, homodimer.

Its subcellular location is the cytoplasm. In terms of biological role, can bind to ATTGG and CCAAT motifs (Y-box motifs) of single-stranded oligonucleotides. The sequence is that of Cold shock-like protein CspE (cspE) from Bacillus anthracis.